A 297-amino-acid chain; its full sequence is Probable transcription factor vicR (297 aa).

Disordered stretches follow at residues 45–80 (LPGL…HSET) and 100–134 (TNQA…KNVH). Residues 58 to 67 (QKEEMRRKNA) are compositionally biased toward basic and acidic residues. Residues 69–80 (AQMQNDSNHSET) show a composition bias toward polar residues. Residues 110 to 124 (RSREDITNSRAERHS) show a composition bias toward basic and acidic residues.

Its subcellular location is the nucleus. In terms of biological role, probable transcription factor; part of the gene cluster that mediates the biosynthesis of the secondary metabolite victorin, the molecular basis for Victoria blight of oats. May play a role in the regulation of the production of victorin. This chain is Probable transcription factor vicR, found in Bipolaris victoriae (strain FI3) (Victoria blight of oats agent).